Here is a 211-residue protein sequence, read N- to C-terminus: MTKTVALLDYGSGNLRSAQRALERAGAEVIVSSDPEVCTNADGLLVPGVGAFDACMKGLKNVFGHRIIGQRLAGGRPVMGICVGMQILFDEGDEHGIKSAGCGEWPGKVERLQAEILPHMGWNTLEMPTNSPMFEGISPDERFYFVHSYGVRKWTLETDDLTTPPEVVWAKHENDRFVAAVENGTLWATQFHPEKSGDAGAQLLRNWINYI.

The 208-residue stretch at 4 to 211 (TVALLDYGSG…QLLRNWINYI (208 aa)) folds into the Glutamine amidotransferase type-1 domain. Cysteine 82 acts as the Nucleophile in catalysis. Residues histidine 192 and glutamate 194 contribute to the active site.

As to quaternary structure, heterodimer of HisH and HisF.

Its subcellular location is the cytoplasm. It catalyses the reaction 5-[(5-phospho-1-deoxy-D-ribulos-1-ylimino)methylamino]-1-(5-phospho-beta-D-ribosyl)imidazole-4-carboxamide + L-glutamine = D-erythro-1-(imidazol-4-yl)glycerol 3-phosphate + 5-amino-1-(5-phospho-beta-D-ribosyl)imidazole-4-carboxamide + L-glutamate + H(+). The enzyme catalyses L-glutamine + H2O = L-glutamate + NH4(+). Its pathway is amino-acid biosynthesis; L-histidine biosynthesis; L-histidine from 5-phospho-alpha-D-ribose 1-diphosphate: step 5/9. Its function is as follows. IGPS catalyzes the conversion of PRFAR and glutamine to IGP, AICAR and glutamate. The HisH subunit catalyzes the hydrolysis of glutamine to glutamate and ammonia as part of the synthesis of IGP and AICAR. The resulting ammonia molecule is channeled to the active site of HisF. This chain is Imidazole glycerol phosphate synthase subunit HisH (hisH), found in Corynebacterium glutamicum (strain ATCC 13032 / DSM 20300 / JCM 1318 / BCRC 11384 / CCUG 27702 / LMG 3730 / NBRC 12168 / NCIMB 10025 / NRRL B-2784 / 534).